The primary structure comprises 357 residues: UDP-N-acetylglucosamine--N-acetylmuramyl-(pentapeptide) pyrophosphoryl-undecaprenol N-acetylglucosamine transferase (357 aa).

Residues 14 to 16 (SGG), Asn-125, Ser-190, and Gln-290 each bind UDP-N-acetyl-alpha-D-glucosamine.

It belongs to the glycosyltransferase 28 family. MurG subfamily.

It is found in the cell inner membrane. It carries out the reaction di-trans,octa-cis-undecaprenyl diphospho-N-acetyl-alpha-D-muramoyl-L-alanyl-D-glutamyl-meso-2,6-diaminopimeloyl-D-alanyl-D-alanine + UDP-N-acetyl-alpha-D-glucosamine = di-trans,octa-cis-undecaprenyl diphospho-[N-acetyl-alpha-D-glucosaminyl-(1-&gt;4)]-N-acetyl-alpha-D-muramoyl-L-alanyl-D-glutamyl-meso-2,6-diaminopimeloyl-D-alanyl-D-alanine + UDP + H(+). The protein operates within cell wall biogenesis; peptidoglycan biosynthesis. Its function is as follows. Cell wall formation. Catalyzes the transfer of a GlcNAc subunit on undecaprenyl-pyrophosphoryl-MurNAc-pentapeptide (lipid intermediate I) to form undecaprenyl-pyrophosphoryl-MurNAc-(pentapeptide)GlcNAc (lipid intermediate II). The protein is UDP-N-acetylglucosamine--N-acetylmuramyl-(pentapeptide) pyrophosphoryl-undecaprenol N-acetylglucosamine transferase of Chlamydia felis (strain Fe/C-56) (Chlamydophila felis).